A 307-amino-acid polypeptide reads, in one-letter code: Junctional adhesion molecule 2A (307 aa).

The first 18 residues, 1–18 (MLVCVSLLILIHSVPVSP), serve as a signal peptide directing secretion. The Ig-like V-type domain occupies 19–112 (VTVSSRNPKV…EVSAPSDSIS (94 aa)). Topologically, residues 19–226 (VTVSSRNPKV…FQTHDLNVAA (208 aa)) are extracellular. 2 disulfides stabilise this stretch: C40–C102 and C147–C197. In terms of domain architecture, Ig-like C2-type spans 126–225 (PQTPSCDVPS…TFQTHDLNVA (100 aa)). Residues 227 to 247 (VVSAVVLVCVILFLCAFGVCL) traverse the membrane as a helical segment. The Cytoplasmic portion of the chain corresponds to 248–307 (AHRQGYFSRHRGRSFWIPHCHGVTHISSQNLNPSEHTQHSGYSHPPKEPQDFKHTQSFML). Polar residues predominate over residues 278 to 288 (LNPSEHTQHSG). The tract at residues 278 to 307 (LNPSEHTQHSGYSHPPKEPQDFKHTQSFML) is disordered. Basic and acidic residues predominate over residues 292 to 301 (PPKEPQDFKH).

This sequence belongs to the immunoglobulin superfamily.

The protein resides in the cell membrane. Its subcellular location is the cell junction. It is found in the tight junction. Its function is as follows. Junctional adhesion protein that mediates heterotypic cell-cell interactions to regulate different cellular processes. During myogenesis, it is involved in myocyte fusion through the binding of jam3b on neighboring myocytes. This chain is Junctional adhesion molecule 2A (jam2a), found in Danio rerio (Zebrafish).